The sequence spans 238 residues: Orotidine 5'-phosphate decarboxylase (238 aa).

Substrate-binding positions include aspartate 10, lysine 32, 59-68, threonine 122, arginine 184, glutamine 193, glycine 213, and arginine 214; that span reads DLKLHDIPNT. Catalysis depends on lysine 61, which acts as the Proton donor.

It belongs to the OMP decarboxylase family. Type 1 subfamily. In terms of assembly, homodimer.

The catalysed reaction is orotidine 5'-phosphate + H(+) = UMP + CO2. It functions in the pathway pyrimidine metabolism; UMP biosynthesis via de novo pathway; UMP from orotate: step 2/2. Functionally, catalyzes the decarboxylation of orotidine 5'-monophosphate (OMP) to uridine 5'-monophosphate (UMP). This chain is Orotidine 5'-phosphate decarboxylase, found in Bacillus cereus (strain AH187).